The primary structure comprises 504 residues: Cytochrome P450 2D10 (504 aa).

Residue Ser-249 is modified to Phosphoserine. Cys-446 lines the heme pocket.

Belongs to the cytochrome P450 family. It depends on heme as a cofactor.

The protein resides in the endoplasmic reticulum membrane. It is found in the microsome membrane. It carries out the reaction an organic molecule + reduced [NADPH--hemoprotein reductase] + O2 = an alcohol + oxidized [NADPH--hemoprotein reductase] + H2O + H(+). Functionally, cytochromes P450 are a group of heme-thiolate monooxygenases. In liver microsomes, this enzyme is involved in an NADPH-dependent electron transport pathway. It oxidizes a variety of structurally unrelated compounds, including steroids, fatty acids, and xenobiotics. This is Cytochrome P450 2D10 (Cyp2d10) from Mus musculus (Mouse).